Consider the following 570-residue polypeptide: Protein NRT1/ PTR FAMILY 8.2 (570 aa).

T99 is modified (phosphothreonine). 10 helical membrane-spanning segments follow: residues I100–V120, A136–I156, F182–V202, W210–A230, I335–L355, I370–Y390, I414–A434, I454–G474, A493–V513, and Y537–A557.

Belongs to the major facilitator superfamily. Proton-dependent oligopeptide transporter (POT/PTR) (TC 2.A.17) family. Expressed in developing and germinating pollen grains and ovules.

It is found in the cell membrane. Its function is as follows. Peptide transporter. Mediates the transport of di- and tripeptides. High affinity transporter. Involved in the uptake of peptides during pollen germination and tube growth. The polypeptide is Protein NRT1/ PTR FAMILY 8.2 (NPF8.2) (Arabidopsis thaliana (Mouse-ear cress)).